The primary structure comprises 227 residues: Cytochrome c oxidase subunit 2 (227 aa).

Residues Met-1–Ser-14 lie on the Mitochondrial intermembrane side of the membrane. The helical transmembrane segment at Pro-15–Met-45 threads the bilayer. Over Leu-46–Gln-59 the chain is Mitochondrial matrix. A helical membrane pass occupies residues Glu-60–Met-87. Topologically, residues Asp-88 to Ile-227 are mitochondrial intermembrane. Cu cation contacts are provided by His-161, Cys-196, Glu-198, Cys-200, His-204, and Met-207. Glu-198 serves as a coordination point for Mg(2+).

The protein belongs to the cytochrome c oxidase subunit 2 family. In terms of assembly, component of the cytochrome c oxidase (complex IV, CIV), a multisubunit enzyme composed of 14 subunits. The complex is composed of a catalytic core of 3 subunits MT-CO1, MT-CO2 and MT-CO3, encoded in the mitochondrial DNA, and 11 supernumerary subunits COX4I, COX5A, COX5B, COX6A, COX6B, COX6C, COX7A, COX7B, COX7C, COX8 and NDUFA4, which are encoded in the nuclear genome. The complex exists as a monomer or a dimer and forms supercomplexes (SCs) in the inner mitochondrial membrane with NADH-ubiquinone oxidoreductase (complex I, CI) and ubiquinol-cytochrome c oxidoreductase (cytochrome b-c1 complex, complex III, CIII), resulting in different assemblies (supercomplex SCI(1)III(2)IV(1) and megacomplex MCI(2)III(2)IV(2)). Found in a complex with TMEM177, COA6, COX18, COX20, SCO1 and SCO2. Interacts with TMEM177 in a COX20-dependent manner. Interacts with COX20. Interacts with COX16. Cu cation serves as cofactor.

It is found in the mitochondrion inner membrane. It catalyses the reaction 4 Fe(II)-[cytochrome c] + O2 + 8 H(+)(in) = 4 Fe(III)-[cytochrome c] + 2 H2O + 4 H(+)(out). Component of the cytochrome c oxidase, the last enzyme in the mitochondrial electron transport chain which drives oxidative phosphorylation. The respiratory chain contains 3 multisubunit complexes succinate dehydrogenase (complex II, CII), ubiquinol-cytochrome c oxidoreductase (cytochrome b-c1 complex, complex III, CIII) and cytochrome c oxidase (complex IV, CIV), that cooperate to transfer electrons derived from NADH and succinate to molecular oxygen, creating an electrochemical gradient over the inner membrane that drives transmembrane transport and the ATP synthase. Cytochrome c oxidase is the component of the respiratory chain that catalyzes the reduction of oxygen to water. Electrons originating from reduced cytochrome c in the intermembrane space (IMS) are transferred via the dinuclear copper A center (CU(A)) of subunit 2 and heme A of subunit 1 to the active site in subunit 1, a binuclear center (BNC) formed by heme A3 and copper B (CU(B)). The BNC reduces molecular oxygen to 2 water molecules using 4 electrons from cytochrome c in the IMS and 4 protons from the mitochondrial matrix. This Cephalopachus bancanus (Western tarsier) protein is Cytochrome c oxidase subunit 2 (MT-CO2).